The sequence spans 430 residues: Maintenance of mitochondrial morphology protein 1 (430 aa).

Over 1 to 82 the chain is Lumenal; that stretch reads MTEIDPNINE…ISNTWNFTQG (82 aa). A helical transmembrane segment spans residues 83-103; the sequence is LVVGQLSVIFLIIIFVKFFVF. Residues 104–430 are Cytoplasmic-facing; sequence ADSSSSIPSK…AKPKDSDDTL (327 aa). Basic and acidic residues-rich tracts occupy residues 126 to 138 and 335 to 346; these read RDNK…DRHN and ENGKGSSSEDKK. 2 disordered regions span residues 126–154 and 315–346; these read RDNK…TDDE and QADQ…EDKK. Residues 178-408 enclose the SMP-LTD domain; the sequence is ASESLDWFNV…EPRFQVVKLP (231 aa).

The protein belongs to the MMM1 family. As to quaternary structure, homodimer. Component of the ER-mitochondria encounter structure (ERMES) or MDM complex, composed of MMM1, MDM10, MDM12 and MDM34. An MMM1 homodimer associates with one molecule of MDM12 on each side in a pairwise head-to-tail manner, and the SMP-LTD domains of MMM1 and MDM12 generate a continuous hydrophobic tunnel for phospholipid trafficking.

The protein resides in the endoplasmic reticulum membrane. In terms of biological role, component of the ERMES/MDM complex, which serves as a molecular tether to connect the endoplasmic reticulum (ER) and mitochondria. Components of this complex are involved in the control of mitochondrial shape and protein biogenesis, and function in nonvesicular lipid trafficking between the ER and mitochondria. The MDM12-MMM1 subcomplex functions in the major beta-barrel assembly pathway that is responsible for biogenesis of all outer membrane beta-barrel proteins, and acts in a late step after the SAM complex. The MDM10-MDM12-MMM1 subcomplex further acts in the TOM40-specific pathway after the action of the MDM12-MMM1 complex. Essential for establishing and maintaining the structure of mitochondria and maintenance of mtDNA nucleoids. This is Maintenance of mitochondrial morphology protein 1 from Lodderomyces elongisporus (strain ATCC 11503 / CBS 2605 / JCM 1781 / NBRC 1676 / NRRL YB-4239) (Yeast).